Consider the following 292-residue polypeptide: MFNRVVLFLLTNFAVLILAGIVMSVLGVNPTQMSGLLVMAAIFGFGGSFISLLLSKFMAKRSTGAQVITEPRTQTERWLVDTVRRQAQAAGIGMPEVAIYDGPEINAFATGANRNNALVAVSTGLLQHMREDEAEAVLGHEIAHIANGDMVTMALLQGVLNTFVIVLARVVGGIIDSALSGNRDSGRGFAYYIIVFVLEMVFGLFATMIAMWFSRRREFRADAGGAQLAGRNKMIAALERLSLNHGQNTLPSQVQAFGISGGVGEGLRRLFLSHPPLTERIAALRASNGTAM.

2 consecutive transmembrane segments (helical) span residues 5-25 and 35-55; these read VVLFLLTNFAVLILAGIVMSV and GLLVMAAIFGFGGSFISLLLS. Histidine 140 provides a ligand contact to Zn(2+). The active site involves glutamate 141. Histidine 144 contributes to the Zn(2+) binding site. The next 2 membrane-spanning stretches (helical) occupy residues 155-175 and 193-213; these read LLQGVLNTFVIVLARVVGGII and IIVFVLEMVFGLFATMIAMWF. Position 218 (glutamate 218) interacts with Zn(2+).

This sequence belongs to the peptidase M48B family. Zn(2+) is required as a cofactor.

It is found in the cell inner membrane. The polypeptide is Protease HtpX (Xanthomonas campestris pv. campestris (strain 8004)).